A 474-amino-acid polypeptide reads, in one-letter code: Amidophosphoribosyltransferase (474 aa).

Residues 1–10 (MLGESEVRDK) constitute a propeptide that is removed on maturation. Cysteine 11 (nucleophile) is an active-site residue. Positions 11–234 (CGIVGIYSQD…PGEILHLNRG (224 aa)) constitute a Glutamine amidotransferase type-2 domain. Cysteine 250 serves as a coordination point for [4Fe-4S] cluster. Mg(2+) contacts are provided by serine 297, aspartate 359, and aspartate 360. Residues cysteine 396, cysteine 447, and cysteine 450 each contribute to the [4Fe-4S] cluster site.

It in the C-terminal section; belongs to the purine/pyrimidine phosphoribosyltransferase family. Requires Mg(2+) as cofactor. The cofactor is [4Fe-4S] cluster.

It catalyses the reaction 5-phospho-beta-D-ribosylamine + L-glutamate + diphosphate = 5-phospho-alpha-D-ribose 1-diphosphate + L-glutamine + H2O. It participates in purine metabolism; IMP biosynthesis via de novo pathway; N(1)-(5-phospho-D-ribosyl)glycinamide from 5-phospho-alpha-D-ribose 1-diphosphate: step 1/2. Catalyzes the formation of phosphoribosylamine from phosphoribosylpyrophosphate (PRPP) and glutamine. The polypeptide is Amidophosphoribosyltransferase (Methanothermobacter thermautotrophicus (strain ATCC 29096 / DSM 1053 / JCM 10044 / NBRC 100330 / Delta H) (Methanobacterium thermoautotrophicum)).